Here is a 282-residue protein sequence, read N- to C-terminus: Deoxyribonuclease-1 (282 aa).

The N-terminal stretch at 1–22 is a signal peptide; it reads MRGARLTGALLALAGLLQVALS. N-linked (GlcNAc...) asparagine glycosylation is present at asparagine 40. Glutamate 100 is a catalytic residue. A disulfide bridge links cysteine 123 with cysteine 126. N-linked (GlcNAc...) asparagine glycosylation occurs at asparagine 128. The active site involves histidine 156. A disulfide bond links cysteine 195 and cysteine 231.

The protein belongs to the DNase I family. Ca(2+) is required as a cofactor. It depends on Mg(2+) as a cofactor.

Its subcellular location is the secreted. It is found in the zymogen granule. The protein localises to the nucleus envelope. The enzyme catalyses Endonucleolytic cleavage to 5'-phosphodinucleotide and 5'-phosphooligonucleotide end-products.. Its function is as follows. Serum endocuclease secreted into body fluids by a wide variety of exocrine and endocrine organs. Expressed by non-hematopoietic tissues and preferentially cleaves protein-free DNA. Among other functions, seems to be involved in cell death by apoptosis. Binds specifically to G-actin and blocks actin polymerization. Together with DNASE1L3, plays a key role in degrading neutrophil extracellular traps (NETs). NETs are mainly composed of DNA fibers and are released by neutrophils to bind pathogens during inflammation. Degradation of intravascular NETs by DNASE1 and DNASE1L3 is required to prevent formation of clots that obstruct blood vessels and cause organ damage following inflammation. The sequence is that of Deoxyribonuclease-1 (DNASE1) from Equus caballus (Horse).